The sequence spans 242 residues: Caffeoyl-CoA O-methyltransferase 3 (242 aa).

Residue Lys16 coordinates substrate. Residues Thr58, Glu80, 82 to 83 (GV), Ser88, Asp106, and Ala135 contribute to the S-adenosyl-L-methionine site. Residue Asp158 coordinates substrate. A divalent metal cation is bound at residue Asp158. Asp160 provides a ligand contact to S-adenosyl-L-methionine. A divalent metal cation contacts are provided by Asp184 and Asn185. Asn189 provides a ligand contact to substrate.

It belongs to the class I-like SAM-binding methyltransferase superfamily. Cation-dependent O-methyltransferase family. CCoAMT subfamily. Mg(2+) serves as cofactor. As to expression, mostly expressed in the bottom and middle parts of the stems.

It carries out the reaction (E)-caffeoyl-CoA + S-adenosyl-L-methionine = (E)-feruloyl-CoA + S-adenosyl-L-homocysteine + H(+). It functions in the pathway aromatic compound metabolism; phenylpropanoid biosynthesis. Methylates caffeoyl-CoA to feruloyl-CoA and 5-hydroxyferuloyl-CoA to sinapoyl-CoA. Plays a role in the synthesis of feruloylated polysaccharides. Involved in the reinforcement of the plant cell wall. Also involved in the responding to wounding or pathogen challenge by the increased formation of cell wall-bound ferulic acid polymers. Also methylates free caffeic and 5-hydroxyferulic acids. The polypeptide is Caffeoyl-CoA O-methyltransferase 3 (CCOAOMT3) (Nicotiana tabacum (Common tobacco)).